The following is a 184-amino-acid chain: ATP synthase subunit b 1 (184 aa).

Residues 4–24 (LSILAVLAASPAMAATGPFLS) traverse the membrane as a helical segment.

This sequence belongs to the ATPase B chain family. In terms of assembly, F-type ATPases have 2 components, F(1) - the catalytic core - and F(0) - the membrane proton channel. F(1) has five subunits: alpha(3), beta(3), gamma(1), delta(1), epsilon(1). F(0) has three main subunits: a(1), b(2) and c(10-14). The alpha and beta chains form an alternating ring which encloses part of the gamma chain. F(1) is attached to F(0) by a central stalk formed by the gamma and epsilon chains, while a peripheral stalk is formed by the delta and b chains.

The protein resides in the cell inner membrane. F(1)F(0) ATP synthase produces ATP from ADP in the presence of a proton or sodium gradient. F-type ATPases consist of two structural domains, F(1) containing the extramembraneous catalytic core and F(0) containing the membrane proton channel, linked together by a central stalk and a peripheral stalk. During catalysis, ATP synthesis in the catalytic domain of F(1) is coupled via a rotary mechanism of the central stalk subunits to proton translocation. In terms of biological role, component of the F(0) channel, it forms part of the peripheral stalk, linking F(1) to F(0). This chain is ATP synthase subunit b 1, found in Cereibacter sphaeroides (strain ATCC 17029 / ATH 2.4.9) (Rhodobacter sphaeroides).